The following is a 60-amino-acid chain: Hemocyte defensin Cg-Defh1 (60 aa).

An N-terminal signal peptide occupies residues 1 to 17; it reads LFTLVVLLMVSADMAFA. Residues phenylalanine 19, glycine 20, and cysteine 21 each coordinate beta-D-GlcNAc-(1-&gt;4)-Mur2Ac(oyl-L-Ala-gamma-D-Glu-L-Lys-D-Ala-D-Ala)-di-trans,octa-cis-undecaprenyl diphosphate. Cystine bridges form between cysteine 21-cysteine 42, cysteine 28-cysteine 51, cysteine 32-cysteine 53, and cysteine 37-cysteine 56. A binds to membrane interface region spans residues 22 to 25; it reads PRDQ. Histidine 31 contacts beta-D-GlcNAc-(1-&gt;4)-Mur2Ac(oyl-L-Ala-gamma-D-Glu-L-Lys-D-Ala-D-Ala)-di-trans,octa-cis-undecaprenyl diphosphate. The binds to membrane interface stretch occupies residues 43 to 49; sequence DAVTLWL. Cysteine 51 is a beta-D-GlcNAc-(1-&gt;4)-Mur2Ac(oyl-L-Ala-gamma-D-Glu-L-Lys-D-Ala-D-Ala)-di-trans,octa-cis-undecaprenyl diphosphate binding site.

This sequence belongs to the invertebrate defensin family. As to expression, expressed in hemocytes.

It is found in the secreted. The protein localises to the target cell membrane. Functionally, antibacterial peptide mostly active against Gram-positive bacteria. It acts by selectively inhibiting peptidoglycan biosynthesis through complex formation with the cell wall precursor lipid II (1:1 molar ratio) thus inhibiting cell wall synthesis. It does not disrupt cell membranes. Is noticeably less potent than Cg-Defh2 and Cg-Defm. Shows no or limited activities against Gram-negative bacteria. The polypeptide is Hemocyte defensin Cg-Defh1 (Magallana gigas (Pacific oyster)).